A 284-amino-acid polypeptide reads, in one-letter code: RNase adapter protein RapZ (284 aa).

ATP is bound at residue 8 to 15; the sequence is GRSGSGKS. GTP is bound at residue 56-59; it reads DVRN. An RNA-binding region spans residues 266-284; it reads RSRGKNVQSRHRTLEKRKQ.

It belongs to the RapZ-like family. RapZ subfamily. As to quaternary structure, homotrimer.

Its function is as follows. Modulates the synthesis of GlmS, by affecting the processing and stability of the regulatory small RNA GlmZ. When glucosamine-6-phosphate (GlcN6P) concentrations are high in the cell, RapZ binds GlmZ and targets it to cleavage by RNase E. Consequently, GlmZ is inactivated and unable to activate GlmS synthesis. Under low GlcN6P concentrations, RapZ is sequestered and inactivated by an other regulatory small RNA, GlmY, preventing GlmZ degradation and leading to synthesis of GlmS. The sequence is that of RNase adapter protein RapZ from Serratia proteamaculans (strain 568).